The following is a 435-amino-acid chain: Cell adhesion molecule 2 (435 aa).

A signal peptide spans 1-24 (MIWKRSAVLRFYSVCGLLLQGSQG). Residues 25 to 367 (QFPLTQNVTV…SLAGQNGPDH (343 aa)) lie on the Extracellular side of the membrane. Residues 27–119 (PLTQNVTVVE…PVKTSKAYLT (93 aa)) enclose the Ig-like V-type domain. N31 and N51 each carry an N-linked (GlcNAc...) asparagine glycan. 3 cysteine pairs are disulfide-bonded: C44–C104, C146–C203, and C248–C296. Ig-like C2-type domains are found at residues 127–219 (PQIS…VAMQ) and 227–312 (PSVK…YVLI). N-linked (GlcNAc...) asparagine glycosylation is present at N291. The span at 337–351 (SVTITTSPSTSASSS) shows a compositional bias: low complexity. The segment at 337–360 (SVTITTSPSTSASSSSRRDPNSLA) is disordered. The chain crosses the membrane as a helical span at residues 368–388 (ALIGGIVAVVVFVTLCSIFLL). Topologically, residues 389–435 (GRYLARHKGTYLTNEAKGAEDAPDADTAIINAEGSQVNAEEKKEYFI) are cytoplasmic. S423 bears the Phosphoserine mark.

It belongs to the nectin family. Post-translationally, glycosylation at Asn-51 reduces adhesive binding.

It localises to the cell membrane. The protein localises to the synapse. Its subcellular location is the cell projection. The protein resides in the axon. In terms of biological role, adhesion molecule that engages in homo- and heterophilic interactions with the other nectin-like family members, leading to cell aggregation. Important for synapse organization, providing regulated trans-synaptic adhesion. Preferentially binds to oligodendrocytes. The sequence is that of Cell adhesion molecule 2 (Cadm2) from Mus musculus (Mouse).